Here is a 250-residue protein sequence, read N- to C-terminus: N-acetylmuramoyl-L-alanine amidase CwlH (250 aa).

The N-terminal stretch at 1-44 (MVTIKKDFIPVSNDNRPGYAMAPAYITVHNTANTAKGADAKMHA) is a signal peptide. The N-acetylmuramoyl-L-alanine amidase domain occupies 45–141 (KFVKNPNTSE…KKWSGKECPR (97 aa)).

It belongs to the N-acetylmuramoyl-L-alanine amidase 2 family.

It is found in the secreted. It catalyses the reaction Hydrolyzes the link between N-acetylmuramoyl residues and L-amino acid residues in certain cell-wall glycopeptides.. In terms of biological role, autolysins are involved in some important biological processes such as cell separation, cell-wall turnover, competence for genetic transformation, formation of the flagella and sporulation. Could play a role in mother cell lysis with CwlC. The sequence is that of N-acetylmuramoyl-L-alanine amidase CwlH (cwlH) from Bacillus subtilis (strain 168).